The following is a 144-amino-acid chain: Flagellar assembly factor FliW (144 aa).

Belongs to the FliW family. Interacts with translational regulator CsrA and flagellin(s).

The protein resides in the cytoplasm. In terms of biological role, acts as an anti-CsrA protein, binds CsrA and prevents it from repressing translation of its target genes, one of which is flagellin. Binds to flagellin and participates in the assembly of the flagellum. The polypeptide is Flagellar assembly factor FliW (Bacillus pumilus (strain SAFR-032)).